Reading from the N-terminus, the 87-residue chain is MGQEQDTPWILSTGHISTQKRQDGQQTPKLEHRNSTRLMGHCQKTMNQVVMPKQIVYWKQWLSLRNPILVFLKTRVLKRWRLFSKHE.

The segment at 1 to 38 (MGQEQDTPWILSTGHISTQKRQDGQQTPKLEHRNSTRL) is disordered. Polar residues predominate over residues 14–28 (GHISTQKRQDGQQTP). The mitochondrial targeting sequence stretch occupies residues 65–87 (RNPILVFLKTRVLKRWRLFSKHE).

Belongs to the influenza viruses PB1-F2 family. Oligomer. Interacts with human SLC25A6/ANT3 and VDAC1. Interacts with host MAVS.

Its subcellular location is the host mitochondrion inner membrane. The protein resides in the host nucleus. The protein localises to the host cytoplasm. It is found in the host cytosol. In terms of biological role, plays an important role in promoting lung pathology in both primary viral infection and secondary bacterial infection. Promotes alteration of mitochondrial morphology, dissipation of mitochondrial membrane potential, and cell death. Alternatively, inhibits the production of interferon in the infected cell at the level of host mitochondrial antiviral signaling MAVS. Its level of expression differs greatly depending on which cell type is infected, in a manner that is independent of the levels of expression of other viral proteins. Monocytic cells are more affected than epithelial cells. Seems to disable virus-infected monocytes or other host innate immune cells. During early stage of infection, predisposes the mitochondria to permeability transition through interaction with host SLC25A6/ANT3 and VDAC1. These proteins participate in the formation of the permeability transition pore complex (PTPC) responsible of the release of mitochondrial products that triggers apoptosis. This is Protein PB1-F2 from Influenza A virus (strain A/Puerto Rico/8/1934 H1N1).